Consider the following 147-residue polypeptide: Lectin-like protein BA14k (147 aa).

Residues 1-26 form the signal peptide; it reads MNSFRKTCAGALALIFGATSIVPTVA. Residues 80–100 form a helical membrane-spanning segment; it reads GWWYPLAAFGAGAIIGGAISQ.

Belongs to the BA14k family.

The protein resides in the cell membrane. In terms of biological role, has immunoglobulin-binding and hemagglutination properties, and can bind to mannose. Essential for virulence. May be involved in LPS biosynthesis or polysaccharide transport. The sequence is that of Lectin-like protein BA14k from Brucella abortus (strain S19).